Reading from the N-terminus, the 865-residue chain is MRYTIITLGIIVIGIGIVLSKQWITVFYGIPVWKNSSVQAFCMTPTTSLWATTNCIPDDHDYTEVPLNITEPFEAWGDRNPLIAQAASNIHLLFEQTMKPCVKLSPLCIKMNCVELNSTRERATTPTTTPKSTGLPCVGPTSGENLQSCNASIIEREMEDEPASNCTFAMAGYVRDQKKNYYSVVWNDAEIYCKNKTNSTSKECYMIHCNDSVIKEACDKTYWDQLRLRYCAPAGYALLKCNDEDYNGYKQNCSNVSVVHCTGLMNTTVTTGLLLNGSYHENRTQIWQKHRVNNNTVLILFNKHYNLSVTCRRPGNKTVLPVTIMAGLVFHSQKYNMKLRQAWCHFEGNWRGAWREVKQKIVELPKDRYKGTNNTEHIYLQRQWGDPEASNLWFNCQGEFFYCKMDWFLNYLNNKTWDAYHNFCSSKKKGHAPGPCVQRTYVAYHIRSVINDSYTLSKKTYAPPREGHLQCRSTVTGMTVELNYNSKNRTNVTLSPQIESIWAAELGRYKLVEITPIGFAPTEVRRYTGGHERQKRVPFVLGFLGFLGAAGTAMGAAASSLTVQSRHLLAGILQQQKNLLAAVEAQQQMLKLTIWGVKNLNARVTALEKYLEDQARLNSWGCAWKQVCHTTVEWPWTNRTPDWQNMTWLEWERQIADLESNITGQLVKAREQEEKNLDAYQKLTSWSDFWSWFDFSKWLNILKMGFLVIVGIIGLRLLYTVYGCIVRVRQGYVPLSPQIHIHQVGKGRPDNADEPGEGGDNSRIKLESWXKDSKSRCMQLTAWLTRLNTWLYNSCLTLLIQLRKAFQYLQYGLAELKTGAQEILQTLAGVAQNACHQIWLACRSAYRNIVNSPRRVRQGLEEILN.

Positions 1 to 20 (MRYTIITLGIIVIGIGIVLS) are cleaved as a signal peptide. Topologically, residues 21 to 705 (KQWITVFYGI…SKWLNILKMG (685 aa)) are extracellular. The N-linked (GlcNAc...) asparagine; by host glycan is linked to Asn35. Cys42 and Cys55 are disulfide-bonded. Residues Asn68, Asn117, Asn150, Asn165, Asn195, Asn198, Asn210, Asn252, Asn255, Asn266, Asn276, Asn282, Asn294, Asn306, Asn316, Asn373, Asn414, Asn451, Asn488, and Asn491 are each glycosylated (N-linked (GlcNAc...) asparagine; by host). 5 cysteine pairs are disulfide-bonded: Cys101–Cys218, Cys108–Cys209, Cys113–Cys166, Cys231–Cys261, and Cys241–Cys253. The V1 stretch occupies residues 113–165 (CVELNSTRERATTPTTTPKSTGLPCVGPTSGENLQSCNASIIEREMEDEPASN). The interval 166–209 (CTFAMAGYVRDQKKNYYSVVWNDAEIYCKNKTNSTSKECYMIHC) is V2. The interval 311-343 (CRRPGNKTVLPVTIMAGLVFHSQKYNMKLRQAW) is V3. A disulfide bond links Cys311 and Cys344. Cysteines 396 and 471 form a disulfide. The interval 403–444 (CKMDWFLNYLNNKTWDAYHNFCSSKKKGHAPGPCVQRTYVAY) is V4. Residues 487–494 (KNRTNVTL) are V5. The fusion peptide stretch occupies residues 537–557 (VPFVLGFLGFLGAAGTAMGAA). The immunosuppression stretch occupies residues 600-616 (LNARVTALEKYLEDQAR). N-linked (GlcNAc...) asparagine; by host glycans are attached at residues Asn645 and Asn661. Positions 650–675 (EWERQIADLESNITGQLVKAREQEEK) form a coiled coil. Positions 682–703 (KLTSWSDFWSWFDFSKWLNILK) are MPER; binding to GalCer. The chain crosses the membrane as a helical span at residues 706–726 (FLVIVGIIGLRLLYTVYGCIV). Over 727–865 (RVRQGYVPLS…VRQGLEEILN (139 aa)) the chain is Cytoplasmic. The YXXL motif; contains endocytosis signal motif lies at 732-735 (YVPL). The interval 744–763 (VGKGRPDNADEPGEGGDNSR) is disordered.

As to quaternary structure, the mature envelope protein (Env) consists of a homotrimer of non-covalently associated gp120-gp41 heterodimers. The resulting complex protrudes from the virus surface as a spike. Interacts with host CD4 and CCR5. Gp120 also interacts with the C-type lectins CD209/DC-SIGN and CLEC4M/DC-SIGNR (collectively referred to as DC-SIGN(R)). In terms of assembly, the mature envelope protein (Env) consists of a homotrimer of non-covalently associated gp120-gp41 heterodimers. The resulting complex protrudes from the virus surface as a spike. In terms of processing, specific enzymatic cleavages in vivo yield mature proteins. Envelope glycoproteins are synthesized as an inactive precursor that is heavily N-glycosylated and processed likely by host cell furin in the Golgi to yield the mature SU and TM proteins. The cleavage site between SU and TM requires the minimal sequence [KR]-X-[KR]-R.

The protein localises to the virion membrane. It is found in the host cell membrane. Its subcellular location is the host endosome membrane. Functionally, the surface protein gp120 (SU) attaches the virus to the host lymphoid cell by binding to the primary receptor CD4. This interaction induces a structural rearrangement creating a high affinity binding site for a chemokine coreceptor like CCR5. This peculiar 2 stage receptor-interaction strategy allows gp120 to maintain the highly conserved coreceptor-binding site in a cryptic conformation, protected from neutralizing antibodies. These changes are transmitted to the transmembrane protein gp41 and are thought to activate its fusogenic potential by unmasking its fusion peptide. Surface protein gp120 (SU) may target the virus to gut-associated lymphoid tissue (GALT) by binding host ITGA4/ITGB7 (alpha-4/beta-7 integrins), a complex that mediates T-cell migration to the GALT. Interaction between gp120 and ITGA4/ITGB7 would allow the virus to enter GALT early in the infection, infecting and killing most of GALT's resting CD4+ T-cells. This T-cell depletion is believed to be the major insult to the host immune system leading to AIDS. In terms of biological role, the surface protein gp120 is a ligand for CD209/DC-SIGN and CLEC4M/DC-SIGNR, which are respectively found on dendritic cells (DCs), and on endothelial cells of liver sinusoids and lymph node sinuses. These interactions allow capture of viral particles at mucosal surfaces by these cells and subsequent transmission to permissive cells. DCs are professional antigen presenting cells, critical for host immunity by inducing specific immune responses against a broad variety of pathogens. They act as sentinels in various tissues where they take up antigen, process it, and present it to T-cells following migration to lymphoid organs. SIV subverts the migration properties of dendritic cells to gain access to CD4+ T-cells in lymph nodes. Virus transmission to permissive T-cells occurs either in trans (without DCs infection, through viral capture and transmission), or in cis (following DCs productive infection, through the usual CD4-gp120 interaction), thereby inducing a robust infection. In trans infection, bound virions remain infectious over days and it is proposed that they are not degraded, but protected in non-lysosomal acidic organelles within the DCs close to the cell membrane thus contributing to the viral infectious potential during DCs' migration from the periphery to the lymphoid tissues. On arrival at lymphoid tissues, intact virions recycle back to DCs' cell surface allowing virus transmission to CD4+ T-cells. Virion capture also seems to lead to MHC-II-restricted viral antigen presentation, and probably to the activation of SIV-specific CD4+ cells. Its function is as follows. The transmembrane protein gp41 (TM) acts as a class I viral fusion protein. Under the current model, the protein has at least 3 conformational states: pre-fusion native state, pre-hairpin intermediate state, and post-fusion hairpin state. During fusion of viral and target intracellular membranes, the coiled coil regions (heptad repeats) assume a trimer-of-hairpins structure, positioning the fusion peptide in close proximity to the C-terminal region of the ectodomain. The formation of this structure appears to drive apposition and subsequent fusion of viral and target cell membranes. Complete fusion occurs in host cell endosomes. The virus undergoes clathrin-dependent internalization long before endosomal fusion, thus minimizing the surface exposure of conserved viral epitopes during fusion and reducing the efficacy of inhibitors targeting these epitopes. Membranes fusion leads to delivery of the nucleocapsid into the cytoplasm. Functionally, the envelope glycoprotein gp160 precursor down-modulates cell surface CD4 antigen by interacting with it in the endoplasmic reticulum and blocking its transport to the cell surface. The gp120-gp41 heterodimer allows rapid transcytosis of the virus through CD4 negative cells such as simple epithelial monolayers of the intestinal, rectal and endocervical epithelial barriers. Both gp120 and gp41 specifically recognize glycosphingolipids galactosyl-ceramide (GalCer) or 3' sulfo-galactosyl-ceramide (GalS) present in the lipid rafts structures of epithelial cells. Binding to these alternative receptors allows the rapid transcytosis of the virus through the epithelial cells. This transcytotic vesicle-mediated transport of virions from the apical side to the basolateral side of the epithelial cells does not involve infection of the cells themselves. The polypeptide is Envelope glycoprotein gp160 (env) (Simian immunodeficiency virus agm.vervet (isolate AGM TYO-1) (SIV-agm.ver)).